The sequence spans 800 residues: Fibroblast growth factor receptor 4 (800 aa).

Residues methionine 1–alanine 16 form the signal peptide. Ig-like C2-type domains are found at residues phenylalanine 17–aspartate 115, proline 148–aspartate 236, and proline 245–threonine 345. Residues phenylalanine 17 to aspartate 367 are Extracellular-facing. A disulfide bond links cysteine 54 and cysteine 98. N-linked (GlcNAc...) asparagine glycosylation is present at asparagine 109. Cysteine 168 and cysteine 220 are oxidised to a cystine. 3 N-linked (GlcNAc...) asparagine glycosylation sites follow: asparagine 254, asparagine 286, and asparagine 307. A disulfide bridge connects residues cysteine 267 and cysteine 329. The chain crosses the membrane as a helical span at residues isoleucine 368–tyrosine 388. Residues histidine 389 to threonine 800 are Cytoplasmic-facing. Residues leucine 465–leucine 753 form the Protein kinase domain. ATP contacts are provided by residues leucine 471–valine 479 and lysine 501. The residue at position 571 (serine 571) is a Phosphoserine. Catalysis depends on aspartate 610, which acts as the Proton acceptor. 3 positions are modified to phosphotyrosine; by autocatalysis: tyrosine 640, tyrosine 641, and tyrosine 752. The tract at residues aspartate 768–threonine 800 is disordered. The span at serine 770–serine 781 shows a compositional bias: low complexity.

This sequence belongs to the protein kinase superfamily. Tyr protein kinase family. Fibroblast growth factor receptor subfamily. Monomer. Homodimer after ligand binding. Interacts with FGF1, FGF2, FGF4, FGF6, FGF8, FGF9, FGF16, FGF17, FGF18, FGF19, FGF21 and FGF23 (in vitro). Binding affinity for FGF family members is enhanced by interactions between FGFs and heparan sulfate proteoglycans. Interacts with KLB; this strongly increases the affinity for FGF19 and FGF23. Affinity for FGF19 is strongly increased by KLB and sulfated glycosaminoglycans. KLB and KL both interact with the core-glycosylated FGFR4 in the endoplasmic reticulum and promote its degradation, so that only FGFR4 with fully mature N-glycans is expressed at the cell surface. Identified in a complex with NCAM1, CDH2, PLCG1, FRS2, SRC, SHC1, GAP43 and CTTN. Interacts with MMP14 and HIP1. Interacts with STAT3. Post-translationally, N-glycosylated. Full maturation of the glycan chains in the Golgi is essential for high affinity interaction with FGF19. Ubiquitinated. Subject to proteasomal degradation when not fully glycosylated. In terms of processing, autophosphorylated. Binding of FGF family members together with heparan sulfate proteoglycan or heparin promotes receptor dimerization and autophosphorylation on tyrosine residues. Autophosphorylation occurs in trans between the two FGFR molecules present in the dimer.

The protein localises to the cell membrane. It is found in the endosome. It localises to the endoplasmic reticulum. It catalyses the reaction L-tyrosyl-[protein] + ATP = O-phospho-L-tyrosyl-[protein] + ADP + H(+). Present in an inactive conformation in the absence of bound ligand. Ligand binding leads to dimerization and activation by autophosphorylation on tyrosine residues. In terms of biological role, tyrosine-protein kinase that acts as a cell-surface receptor for fibroblast growth factors and plays a role in the regulation of cell proliferation, differentiation and migration, and in regulation of lipid metabolism, bile acid biosynthesis, glucose uptake, vitamin D metabolism and phosphate homeostasis. Required for normal down-regulation of the expression of CYP7A1, the rate-limiting enzyme in bile acid synthesis, in response to FGF19. Phosphorylates PLCG1 and FRS2. Ligand binding leads to the activation of several signaling cascades. Activation of PLCG1 leads to the production of the cellular signaling molecules diacylglycerol and inositol 1,4,5-trisphosphate. Phosphorylation of FRS2 triggers recruitment of GRB2, GAB1, PIK3R1 and SOS1, and mediates activation of RAS, MAPK1/ERK2, MAPK3/ERK1 and the MAP kinase signaling pathway, as well as of the AKT1 signaling pathway. Promotes SRC-dependent phosphorylation of the matrix protease MMP14 and its lysosomal degradation. FGFR4 signaling is down-regulated by receptor internalization and degradation; MMP14 promotes internalization and degradation of FGFR4. The chain is Fibroblast growth factor receptor 4 (Fgfr4) from Rattus norvegicus (Rat).